Reading from the N-terminus, the 156-residue chain is Cyanate hydratase (156 aa).

Residues Arg96, Glu99, and Ser122 contribute to the active site.

It belongs to the cyanase family.

The catalysed reaction is cyanate + hydrogencarbonate + 3 H(+) = NH4(+) + 2 CO2. Functionally, catalyzes the reaction of cyanate with bicarbonate to produce ammonia and carbon dioxide. This is Cyanate hydratase from Burkholderia pseudomallei (strain 1106a).